A 749-amino-acid polypeptide reads, in one-letter code: Patatin-like phospholipase domain-containing protein An01g04180 (749 aa).

The segment at 1-21 (MNGAEKSAAGDTYDPSTIPDY) is disordered. A helical transmembrane segment spans residues 87–107 (WPFLFTVFGWITALAFAYTLT). The 192-residue stretch at 277-468 (LCLSGGATFA…RTDIPIKALN (192 aa)) folds into the PNPLA domain. The GXSXG signature appears at 308 to 312 (GTSGG). The active-site Nucleophile is serine 310. Aspartate 455 functions as the Proton acceptor in the catalytic mechanism. The disordered stretch occupies residues 619-726 (AGGRPISPAP…STGSSIFEEV (108 aa)). Positions 649 to 664 (PLNERLDHNLPERRGD) are enriched in basic and acidic residues. The span at 685–707 (SLSENSSNESAARPSSSSSSSRL) shows a compositional bias: low complexity.

This sequence belongs to the PLPL family.

It is found in the membrane. Probable lipid hydrolase. The chain is Patatin-like phospholipase domain-containing protein An01g04180 from Aspergillus niger (strain ATCC MYA-4892 / CBS 513.88 / FGSC A1513).